We begin with the raw amino-acid sequence, 341 residues long: Uroporphyrinogen decarboxylase (341 aa).

Residues Arg23–Arg27, Asp73, Tyr148, Ser203, and His318 each bind substrate.

Belongs to the uroporphyrinogen decarboxylase family. As to quaternary structure, homodimer.

Its subcellular location is the cytoplasm. The catalysed reaction is uroporphyrinogen III + 4 H(+) = coproporphyrinogen III + 4 CO2. Its pathway is porphyrin-containing compound metabolism; protoporphyrin-IX biosynthesis; coproporphyrinogen-III from 5-aminolevulinate: step 4/4. Functionally, catalyzes the decarboxylation of four acetate groups of uroporphyrinogen-III to yield coproporphyrinogen-III. The protein is Uroporphyrinogen decarboxylase of Brucella suis (strain ATCC 23445 / NCTC 10510).